A 631-amino-acid chain; its full sequence is ATP-dependent protease PrkA (631 aa).

The residue at position 217 (Thr217) is a Phosphothreonine. Phosphoserine is present on Ser219.

Belongs to the PrkA family. In terms of processing, phosphorylated by PrkC on two sites, Thr-217 and Ser-219, with the threonine being the major site of modification.

The protein localises to the forespore. Its subcellular location is the spore coat. It carries out the reaction Hydrolysis of proteins in presence of ATP.. Hydrolase activity is regulated by phosphorylation by the Ser/Thr kinase PrkC, probably allowing fine control of sporulation. Phosphorylation by PrkC does not prevent ATP fixation but it inhibits specifically PrkA protease activity and down-regulates the sporulation processes. Hydrolase activity is inhibited by a protease inhibitor, phenylmethylsulfonyl fluoride (PMSF). Potential kinase activity requires the presence of MgCl(2) and is inhibited in the presence of MnCl(2). Functionally, ATP-dependent protease that regulates sporulation. Is able to bind and hydrolyze ATP. This ATP-dependent protease activity is necessary for efficient sporulation of B.subtilis. In vitro, can hydrolyze alpha-casein, an exogenous substrate of Lon proteases, in an ATP-dependent manner. PrkA also modulates sporulation by negatively regulating the transcriptional regulator Hpr/ScoC to induce the expression of sigK. The control of sporulation mediated via the Hpr/ScoC regulator is probably indirect. PrkA was originally thought to be a protein kinase, as it has been shown to phosphorylate in vitro an unidentified 60 kDa protein from B.subtilis crude extracts at a serine residue. However, Zhang et al. did not observe autophosphorylation or kinase activity for this protein, suggesting that it may have lost its kinase activity during evolution or may be a pseudokinase. This Bacillus subtilis (strain 168) protein is ATP-dependent protease PrkA.